A 90-amino-acid chain; its full sequence is Small ribosomal subunit protein uS15c (90 aa).

The protein belongs to the universal ribosomal protein uS15 family. As to quaternary structure, part of the 30S ribosomal subunit.

The protein resides in the plastid. The protein localises to the chloroplast. This chain is Small ribosomal subunit protein uS15c (rps15-A), found in Brachypodium distachyon (Purple false brome).